The following is a 91-amino-acid chain: Secretoglobin family 3A member 2 (91 aa).

Positions 1 to 21 (MKLVSIFLLVTIGICGYSATA) are cleaved as a signal peptide.

The protein belongs to the secretoglobin family. UGRP subfamily. As to quaternary structure, homodimer; disulfide-linked. Monomer. Interacts with APOA1. In terms of tissue distribution, highly expressed in lung where it localizes to epithelial cells of the trachea, bronchus and bronchioles (at protein level). Expressed in club cells of the bronchioles. Also detected in the anterior and posterior lobes of the pituitary gland where it may localize to gonadotropic cells (at protein level). Not detected in other tissues tested.

The protein resides in the secreted. In terms of biological role, secreted cytokine-like protein. Binds to the scavenger receptor MARCO. Can also bind to pathogens including the Gram-positive bacterium L.monocytogenes, the Gram-negative bacterium P.aeruginosa, and yeast. Strongly inhibits phospholipase A2 (PLA2G1B) activity. Seems to have anti-inflammatory effects in respiratory epithelium. Also has anti-fibrotic activity in lung. May play a role in fetal lung development and maturation. Promotes branching morphogenesis during early stages of lung development. In the pituitary, may inhibit production of follicle-stimulating hormone (FSH) and luteinizing hormone (LH). This is Secretoglobin family 3A member 2 (Scgb3a2) from Mus musculus (Mouse).